We begin with the raw amino-acid sequence, 200 residues long: MKIILATQNKRKLDEFIELSKNSNYPINFVIKPLKEDIGEIEENGNSYFENALIKANAVFNYYKEPVLSDDSGLELPEFKEILGIYSSRFAGINATDKENRYKLLDYLKSKNITETSAKYVCVLVYIFNQGEALSFKGEWEGKIIVSDNLNLDTGFGYDPMFVPKEYTITVSEMSISEKNLISHRAKAVNQFLNFLKDKK.

Residue 7 to 12 coordinates substrate; that stretch reads TQNKRK. Glu42 and Asp71 together coordinate Mg(2+). The active-site Proton acceptor is the Asp71. Substrate-binding positions include Ser72, 156-159, Lys179, and 184-185; these read FGYD and HR.

The protein belongs to the HAM1 NTPase family. In terms of assembly, homodimer. Requires Mg(2+) as cofactor.

The enzyme catalyses XTP + H2O = XMP + diphosphate + H(+). It carries out the reaction dITP + H2O = dIMP + diphosphate + H(+). The catalysed reaction is ITP + H2O = IMP + diphosphate + H(+). Functionally, pyrophosphatase that catalyzes the hydrolysis of nucleoside triphosphates to their monophosphate derivatives, with a high preference for the non-canonical purine nucleotides XTP (xanthosine triphosphate), dITP (deoxyinosine triphosphate) and ITP. Seems to function as a house-cleaning enzyme that removes non-canonical purine nucleotides from the nucleotide pool, thus preventing their incorporation into DNA/RNA and avoiding chromosomal lesions. The chain is dITP/XTP pyrophosphatase from Malacoplasma penetrans (strain HF-2) (Mycoplasma penetrans).